An 882-amino-acid polypeptide reads, in one-letter code: Formin-like protein 9 (882 aa).

Positions 1 to 19 are cleaved as a signal peptide; that stretch reads MGMAMRCVLVLFSVSPVLL. Residues 67-92 are disordered; that stretch reads SRGRRHKRYSEAPAPAPAPVPAHQAR. A helical membrane pass occupies residues 138–158; it reads IVALGVVGLCLVVLGVVIAAF. Disordered regions lie at residues 178–202, 293–316, and 401–471; these read RHGS…PDPL, THDS…LSPK, and TMTN…PLPR. The segment covering 298–308 has biased composition (low complexity); sequence SDSSYQSLSPD. Pro residues predominate over residues 427–441; sequence KPAPPPPPQKNPPPN. The region spanning 462-882 is the FH2 domain; it reads VGKDGSPLPR…QTLNLVLPLK (421 aa).

This sequence belongs to the formin-like family. Class-I subfamily.

It localises to the membrane. The chain is Formin-like protein 9 (FH9) from Oryza sativa subsp. japonica (Rice).